A 587-amino-acid chain; its full sequence is Heavy metal-associated isoprenylated plant protein 33 (587 aa).

One can recognise an HMA domain in the interval 9 to 72 (IQTCVLKVNI…KLLKSGKHAE (64 aa)). Residues cysteine 20 and cysteine 23 each coordinate a metal cation. Disordered regions lie at residues 98-146 (QIDH…MVIP), 176-261 (LKLP…KPMM), 287-449 (AHKN…PMSN), 462-504 (PGGG…QQQQ), and 532-587 (YARP…CNIM). 2 stretches are compositionally biased toward gly residues: residues 104 to 113 (KGGGGGGGGP) and 121 to 140 (KIGG…GGGP). The span at 194–208 (PMNKNPQMPNNPNQK) shows a compositional bias: low complexity. Positions 215 to 248 (PDDDDEEDFSDEFDDEFDEDDDEFDDDLEDDEFD) are enriched in acidic residues. Composition is skewed to gly residues over residues 290 to 300 (NGGGPGPAGGK), 312 to 419 (MGGG…GGGP), and 428 to 445 (GAMG…GGPG). Low complexity predominate over residues 471–483 (SAEAPPGYFQGQV). Pro residues-rich tracts occupy residues 534–547 (RPPP…PQPQ) and 554–565 (YPYPYPYPPQYP). Positions 578–587 (DENTSSCNIM) are enriched in polar residues. Cysteine 584 carries the post-translational modification Cysteine methyl ester. Cysteine 584 carries S-farnesyl cysteine lipidation. A propeptide spans 585-587 (NIM) (removed in mature form).

This sequence belongs to the HIPP family.

Functionally, heavy-metal-binding protein. The chain is Heavy metal-associated isoprenylated plant protein 33 from Arabidopsis thaliana (Mouse-ear cress).